A 548-amino-acid chain; its full sequence is Natural resistance-associated macrophage protein 1 (548 aa).

The segment at 1-38 is disordered; it reads MSGDTGPPKQGGTRYGSISSPPSPEPQQAPPGGTYLSE. The Cytoplasmic segment spans residues 1 to 55; sequence MSGDTGPPKQGGTRYGSISSPPSPEPQQAPPGGTYLSEKIPIPDTESGTFSLRKL. Residues 56–73 form a helical membrane-spanning segment; the sequence is WAFTGPGFLMSIAFLDPG. Residues 74–82 lie on the Extracellular side of the membrane; it reads NIESDLQAG. Residues 83-102 form a helical membrane-spanning segment; the sequence is AVAGFKLLWVLLWATVLGLL. Topologically, residues 103-139 are cytoplasmic; it reads CQRLAARLGVVTGKDLGEVCHLYYPKVPRILLWLTIE. Residues 140 to 160 form a helical membrane-spanning segment; it reads LAIVGSDMQEVIGTAIAFSLL. Topologically, residues 161–164 are extracellular; sequence SAGR. A helical membrane pass occupies residues 165–184; sequence IPLWGGVLITVVDTFFFLFL. At 185–193 the chain is on the cytoplasmic side; sequence DNYGLRKLE. The helical transmembrane segment at 194–214 threads the bilayer; it reads AFFGFLITIMALTFGYEYVVA. Topologically, residues 215 to 237 are extracellular; sequence QPAQGALLQGLFLPSCPGCGQPE. The chain crosses the membrane as a helical span at residues 238–256; it reads LLQAVGIIGAIIMPHNIYL. Residues 257 to 284 lie on the Cytoplasmic side of the membrane; the sequence is HSSLVKSREVDRSRRADIREANMYFLIE. The helical transmembrane segment at 285-304 threads the bilayer; sequence ATIALSVSFLINLFVMAVFG. The Extracellular portion of the chain corresponds to 305 to 346; that stretch reads QAFYKQTNQAAFNICADSSLHDYAPIFPRNNLTVAVDIYQGG. N-linked (GlcNAc...) asparagine glycosylation occurs at asparagine 335. A helical transmembrane segment spans residues 347 to 366; sequence VILGCLFGPPALYIWAVGLL. Residues 367–397 are Cytoplasmic-facing; the sequence is AAGQSSTMTGTYAGQFVMEGFLKLRWSRFAR. A helical membrane pass occupies residues 398–415; it reads VLLTRSCAILPTVLLAVF. Residues 416–426 are Extracellular-facing; sequence RDLRDLSGLND. A helical membrane pass occupies residues 427 to 447; that stretch reads LLNVLQSLLLPFAVLPILTFT. The Cytoplasmic segment spans residues 448–463; it reads SMPALMQEFANGLVSK. The chain crosses the membrane as a helical span at residues 464 to 485; the sequence is VITSSIMVLVCAVNLYFVISYL. Residues 486–493 lie on the Extracellular side of the membrane; the sequence is PSLPHPAY. Residues 494-513 form a helical membrane-spanning segment; the sequence is FSLVALLAAAYLGLTTYLVW. The Cytoplasmic portion of the chain corresponds to 514-548; sequence TCLITQGATLLAHSSHQRFLYGLPEEDQEKGRTSG.

It belongs to the NRAMP family.

It localises to the late endosome membrane. The protein resides in the lysosome membrane. The enzyme catalyses Zn(2+)(in) + H(+)(out) = Zn(2+)(out) + H(+)(in). It carries out the reaction Fe(2+)(in) + H(+)(out) = Fe(2+)(out) + H(+)(in). The catalysed reaction is Mn(2+)(in) + H(+)(out) = Mn(2+)(out) + H(+)(in). Functionally, macrophage-specific antiporter that fluxes metal ions in either direction against a proton gradient. Localized to late endosomal lysosomal membranes, delivers bivalent cations from the cytosol into these acidic compartments where they may directly affect antimicrobial activity. Involved in iron metabolism and host natural resistance to infection with intracellular parasites. Pathogen resistance involves sequestration of Fe(2+) and Mn(2+), cofactors of both prokaryotic and eukaryotic catalases and superoxide dismutases, not only to protect the macrophage against its own generation of reactive oxygen species, but to deny the cations to the pathogen for synthesis of its protective enzymes. The chain is Natural resistance-associated macrophage protein 1 (SLC11A1) from Bos taurus (Bovine).